Consider the following 353-residue polypeptide: Rhodopsin (353 aa).

Over 1–36 (MNGTEGPYFYVPMVNTSGIVRSPYEYPQYYLVNPAA) the chain is Extracellular. Residues Asn2 and Asn15 are each glycosylated (N-linked (GlcNAc...) asparagine). The helical transmembrane segment at 37–61 (YAALGAYMFLLILVGFPINFLTLYV) threads the bilayer. Over 62-73 (TIEHKKLRTPLN) the chain is Cytoplasmic. The chain crosses the membrane as a helical span at residues 74 to 96 (YILLNLAVADLFMVFGGFTTTMY). At 97 to 110 (TSMHGYFVLGRLGC) the chain is on the extracellular side. Residues Cys110 and Cys187 are joined by a disulfide bond. A helical membrane pass occupies residues 111–133 (NIEGFFATLGGEIALWSLVVLAI). Residues 134–136 (ERW) carry the 'Ionic lock' involved in activated form stabilization motif. The Cytoplasmic portion of the chain corresponds to 134–152 (ERWVVVCKPISNFRFGENH). The helical transmembrane segment at 153–173 (AIMGLAFTWLMAMACAAPPLV) threads the bilayer. Over 174–202 (GWSRYIPEGMQCSCGIDYYTRAEGFNNES) the chain is Extracellular. A glycan (N-linked (GlcNAc...) asparagine) is linked at Asn200. The chain crosses the membrane as a helical span at residues 203-224 (FVIYMFVCHFLIPLMVVFFCYG). Over 225 to 252 (RLLCAVKEAAAAQQESETTQRAEREVTR) the chain is Cytoplasmic. A helical transmembrane segment spans residues 253–274 (MVVIMVIAFLICWCPYAGVAWW). Topologically, residues 275–286 (IFTHQGSDFGPV) are extracellular. Residues 287 to 308 (FMTIPAFFAKSSSIYNPMIYIC) traverse the membrane as a helical segment. Lys296 carries the N6-(retinylidene)lysine modification. At 309-353 (LNKQFRHCMITTLCCGKNPFEEEEGASTASKTEASSVSSSSVSPA) the chain is on the cytoplasmic side. Residues Cys322 and Cys323 are each lipidated (S-palmitoyl cysteine). The segment at 331-353 (EEGASTASKTEASSVSSSSVSPA) is disordered. Over residues 334 to 353 (ASTASKTEASSVSSSSVSPA) the composition is skewed to low complexity.

This sequence belongs to the G-protein coupled receptor 1 family. Opsin subfamily. In terms of processing, phosphorylated on some or all of the serine and threonine residues present in the C-terminal region. Post-translationally, contains one covalently linked retinal chromophore.

The protein resides in the membrane. It localises to the cell projection. Its subcellular location is the cilium. It is found in the photoreceptor outer segment. Photoreceptor required for image-forming vision at low light intensity. While most salt water fish species use retinal as chromophore, most freshwater fish use 3-dehydroretinal, or a mixture of retinal and 3-dehydroretinal. Light-induced isomerization of 11-cis to all-trans retinal triggers a conformational change that activates signaling via G-proteins. Subsequent receptor phosphorylation mediates displacement of the bound G-protein alpha subunit by arrestin and terminates signaling. This is Rhodopsin (rho) from Lithognathus mormyrus (Striped seabream).